A 312-amino-acid chain; its full sequence is Acetyl-coenzyme A carboxylase carboxyl transferase subunit alpha (312 aa).

The CoA carboxyltransferase C-terminal domain occupies 36–286 (RLDKEVKSIY…KEYFLDALRT (251 aa)).

This sequence belongs to the AccA family. In terms of assembly, acetyl-CoA carboxylase is a heterohexamer composed of biotin carboxyl carrier protein (AccB), biotin carboxylase (AccC) and two subunits each of ACCase subunit alpha (AccA) and ACCase subunit beta (AccD).

It is found in the cytoplasm. The catalysed reaction is N(6)-carboxybiotinyl-L-lysyl-[protein] + acetyl-CoA = N(6)-biotinyl-L-lysyl-[protein] + malonyl-CoA. It functions in the pathway lipid metabolism; malonyl-CoA biosynthesis; malonyl-CoA from acetyl-CoA: step 1/1. Component of the acetyl coenzyme A carboxylase (ACC) complex. First, biotin carboxylase catalyzes the carboxylation of biotin on its carrier protein (BCCP) and then the CO(2) group is transferred by the carboxyltransferase to acetyl-CoA to form malonyl-CoA. This chain is Acetyl-coenzyme A carboxylase carboxyl transferase subunit alpha, found in Helicobacter pylori (strain ATCC 700392 / 26695) (Campylobacter pylori).